We begin with the raw amino-acid sequence, 263 residues long: Oxygen-evolving enhancer protein 2-1, chloroplastic (263 aa).

S153 is subject to Phosphoserine.

This sequence belongs to the PsbP family. As to quaternary structure, interacts with WAK1.

The protein localises to the plastid. It localises to the chloroplast thylakoid lumen. In terms of biological role, may be involved in the regulation of photosystem II. This chain is Oxygen-evolving enhancer protein 2-1, chloroplastic (PSBP1), found in Arabidopsis thaliana (Mouse-ear cress).